Here is a 407-residue protein sequence, read N- to C-terminus: Phosphopentomutase (407 aa).

Aspartate 10, aspartate 306, histidine 311, aspartate 347, histidine 348, and histidine 359 together coordinate Mn(2+).

The protein belongs to the phosphopentomutase family. Mn(2+) serves as cofactor.

It is found in the cytoplasm. The enzyme catalyses 2-deoxy-alpha-D-ribose 1-phosphate = 2-deoxy-D-ribose 5-phosphate. It carries out the reaction alpha-D-ribose 1-phosphate = D-ribose 5-phosphate. The protein operates within carbohydrate degradation; 2-deoxy-D-ribose 1-phosphate degradation; D-glyceraldehyde 3-phosphate and acetaldehyde from 2-deoxy-alpha-D-ribose 1-phosphate: step 1/2. Its function is as follows. Isomerase that catalyzes the conversion of deoxy-ribose 1-phosphate (dRib-1-P) and ribose 1-phosphate (Rib-1-P) to deoxy-ribose 5-phosphate (dRib-5-P) and ribose 5-phosphate (Rib-5-P), respectively. The protein is Phosphopentomutase of Salmonella paratyphi C (strain RKS4594).